Here is a 271-residue protein sequence, read N- to C-terminus: Bifunctional protein FolD (271 aa).

NADP(+) is bound by residues 154–156, Ser-181, and Ile-222; that span reads GRS.

This sequence belongs to the tetrahydrofolate dehydrogenase/cyclohydrolase family. In terms of assembly, homodimer.

The enzyme catalyses (6R)-5,10-methylene-5,6,7,8-tetrahydrofolate + NADP(+) = (6R)-5,10-methenyltetrahydrofolate + NADPH. It carries out the reaction (6R)-5,10-methenyltetrahydrofolate + H2O = (6R)-10-formyltetrahydrofolate + H(+). It functions in the pathway one-carbon metabolism; tetrahydrofolate interconversion. In terms of biological role, catalyzes the oxidation of 5,10-methylenetetrahydrofolate to 5,10-methenyltetrahydrofolate and then the hydrolysis of 5,10-methenyltetrahydrofolate to 10-formyltetrahydrofolate. The sequence is that of Bifunctional protein FolD from Thermotoga maritima (strain ATCC 43589 / DSM 3109 / JCM 10099 / NBRC 100826 / MSB8).